The chain runs to 175 residues: Regenerating islet-derived protein 3-alpha (175 aa).

Positions 1 to 26 (MLPHLVLNSISWMLLSCLLFVFQVQG) are cleaved as a signal peptide. Positions 27–37 (EDFQKEVPSPR) are excised as a propeptide. 3 cysteine pairs are disulfide-bonded: Cys40–Cys51, Cys68–Cys171, and Cys146–Cys163. The C-type lectin domain maps to 47 to 172 (YRSHCYALVM…CDGTLPFVCK (126 aa)). 4 residues coordinate Zn(2+): His50, His107, Glu121, and His145. A sufficient to activate EXTL3 region spans residues 103–118 (WIGLHDPTMGQQPNGG).

As to quaternary structure, forms a hexameric membrane-permeabilizing oligomeric pore on membrane phospholipids. The hexamer is formed by three dimers related by helical symmetry. Forms filaments, filamentation traps pore complexes and limits damage to host cells. Interacts with EXTL3. In terms of processing, proteolytic processing by trypsin removes an inhibitory N-terminal propeptide and is essential for peptidoglycan binding and antibacterial activity. As to expression, small intestine and pancreas.

Its subcellular location is the secreted. Bactericidal C-type lectin. The lack of the EPN motif may explain its inability to bind peptidoglycan. Its function is as follows. Acts as a hormone in response to different stimuli like anti-inflammatory signals, such as IL17A, or gut microbiome. Secreted by different cell types to activate its receptor EXTL3 and induce cell specific signaling pathways. Induced by IL17A in keratinocytes, regulates keratinocyte proliferation and differentiation after skin injury via activation of EXTL3-PI3K-AKT signaling pathway. In parallel, inhibits skin inflammation through the inhibition of inflammatory cytokines such as IL6 and TNF. In pancreas, is able to permealize beta-cells membrane and stimulate their proliferation. The chain is Regenerating islet-derived protein 3-alpha (Reg3a) from Mus musculus (Mouse).